Reading from the N-terminus, the 994-residue chain is MGGLKLPPQTLHGIHGGRRPLTAPSSKPSFTIQPNYSSSISTGFTTRNVALFSPSIFPCGYFILGGARERRFGARNTQASVQPVTEELVEDKTKENPVSGDAIRRRFLEFYASRSHKVLPSASLVPDDPTVLLTIAGMLQFKPIFLGKAPRQVPRATTAQKCIRTNDVENVGRTTRHHTFFEMLGNFSFGDYFKKEAIKWAWELSTKEFGLPADRLWVSVYEDDDEAFEIWHDEVGVPVERIKRMGEEDNFWTSGATGPCGPCSELYYDFHPERGYKNTDLGDDSRFIEFYNLVFMQYNKMDDGSLEPLKQKNIDTGLGLERLARILQKVPNNYETDLIYPIIEKAAELANISYALADDRTKMNLKIIGDHLRAIVYLISDGVLPSNIGRGYVVRRLIRRAVRTGRLLGVKGGGEDGVFLPAIAEKVIELSPHIDPDVKARGHSILDELQREELRFVQTLERGEKLLDQMLAEALLNAQKSETLPCLSGKDVFLLYDTFGFPVEITTEVAEEQGVKIDMDGFEVEMENQRRQSQAAHNVVKLAVENGGDLAENVHDTEFLGYDTLSARAVVESLLLNGKSVIQVSEGSEVEVLLNKTPFYAESGGQIGDHGFLYVTQDQSKQTAVVEIKDVQKSLGSVFVHKGTIREGVLEVGREVEAAVDAKLRQRAKVHHTATHLLQSALKKVIGQETSQAGSLVAFDRLRFDFNFHRPLHDSELEEIENLINGWIGDGTLLQTKVMSLTDAKEAGAIAMFGEKYGEQVRVVEVPGVSMELCGGTHVSNTSEIRAFKIISEQGIASGIRRIEAVAGEAFIEYINARDSQMKLLCSTLKVKAEEVTTRVDNLLEELRTVRNEVSALRAKAAVYKASMIASKAFSVGTSKTIRVLVESMDDFDADALKSAAEYLMDTLQDPAAIILGSCPDEGKVSLVAAFTPGVVDIGIQAGKFIGPIAKLCGGGGGGRPNFAQAGGRKPENLTNALEKARTDLILILTEKAN.

Residues 1–29 (MGGLKLPPQTLHGIHGGRRPLTAPSSKPS) are disordered. Zn(2+) contacts are provided by H672, H676, C774, and H778.

Belongs to the class-II aminoacyl-tRNA synthetase family. In terms of assembly, monomer. The cofactor is Zn(2+).

The protein resides in the plastid. Its subcellular location is the chloroplast. It localises to the mitochondrion. The enzyme catalyses tRNA(Ala) + L-alanine + ATP = L-alanyl-tRNA(Ala) + AMP + diphosphate. Catalyzes the attachment of alanine to tRNA(Ala) in a two-step reaction: alanine is first activated by ATP to form Ala-AMP and then transferred to the acceptor end of tRNA(Ala). Also edits incorrectly charged tRNA(Ala) via its editing domain. This is Alanine--tRNA ligase, chloroplastic/mitochondrial from Populus trichocarpa (Western balsam poplar).